A 390-amino-acid chain; its full sequence is Succinate--CoA ligase [ADP-forming] subunit beta (390 aa).

Positions 9-244 constitute an ATP-grasp domain; it reads KEIFREYGVP…LSEEDPVEVE (236 aa). Residues lysine 46, 53–55, glutamate 99, alanine 102, and glutamate 107 contribute to the ATP site; that span reads GRG. Mg(2+) contacts are provided by asparagine 199 and aspartate 213. Substrate contacts are provided by residues asparagine 264 and 321–323; that span reads GIV.

This sequence belongs to the succinate/malate CoA ligase beta subunit family. In terms of assembly, heterotetramer of two alpha and two beta subunits. The cofactor is Mg(2+).

The catalysed reaction is succinate + ATP + CoA = succinyl-CoA + ADP + phosphate. The enzyme catalyses GTP + succinate + CoA = succinyl-CoA + GDP + phosphate. The protein operates within carbohydrate metabolism; tricarboxylic acid cycle; succinate from succinyl-CoA (ligase route): step 1/1. Functionally, succinyl-CoA synthetase functions in the citric acid cycle (TCA), coupling the hydrolysis of succinyl-CoA to the synthesis of either ATP or GTP and thus represents the only step of substrate-level phosphorylation in the TCA. The beta subunit provides nucleotide specificity of the enzyme and binds the substrate succinate, while the binding sites for coenzyme A and phosphate are found in the alpha subunit. The polypeptide is Succinate--CoA ligase [ADP-forming] subunit beta (Nitratiruptor sp. (strain SB155-2)).